Here is a 128-residue protein sequence, read N- to C-terminus: Small ribosomal subunit protein uS11 (128 aa).

It belongs to the universal ribosomal protein uS11 family. In terms of assembly, part of the 30S ribosomal subunit. Interacts with proteins S7 and S18. Binds to IF-3.

Functionally, located on the platform of the 30S subunit, it bridges several disparate RNA helices of the 16S rRNA. Forms part of the Shine-Dalgarno cleft in the 70S ribosome. This chain is Small ribosomal subunit protein uS11, found in Wolbachia pipientis subsp. Culex pipiens (strain wPip).